The primary structure comprises 270 residues: 5'-AMP-activated protein kinase subunit beta-1 (270 aa).

Residues 1-46 (MGNTSSERAALERHGGHKTPRRDSSGGTKDGDRPKILMDSPEDADL) are disordered. Residue G2 is the site of N-myristoyl glycine attachment. T4 is modified (phosphothreonine). Residues S5 and S6 each carry the phosphoserine modification. A Phosphothreonine modification is found at T19. Over residues 21 to 36 (RRDSSGGTKDGDRPKI) the composition is skewed to basic and acidic residues. Phosphoserine; by autocatalysis occurs at positions 24 and 25. A phosphoserine mark is found at S40, S96, and S101. The interval 68–163 (EVNDKAPAQA…QVKKTDFEVF (96 aa)) is glycogen-binding domain. Position 108 is a phosphoserine; by autocatalysis (S108). At T148 the chain carries Phosphothreonine. Phosphoserine is present on S182.

This sequence belongs to the 5'-AMP-activated protein kinase beta subunit family. In terms of assembly, AMPK is a heterotrimer of an alpha catalytic subunit (PRKAA1 or PRKAA2), a beta (PRKAB1 or PRKAB2) and a gamma non-catalytic subunits (PRKAG1, PRKAG2 or PRKAG3). Interacts with FNIP1 and FNIP2. Phosphorylated when associated with the catalytic subunit (PRKAA1 or PRKAA2). Phosphorylated by ULK1; leading to negatively regulate AMPK activity and suggesting the existence of a regulatory feedback loop between ULK1 and AMPK.

Its function is as follows. Non-catalytic subunit of AMP-activated protein kinase (AMPK), an energy sensor protein kinase that plays a key role in regulating cellular energy metabolism. In response to reduction of intracellular ATP levels, AMPK activates energy-producing pathways and inhibits energy-consuming processes: inhibits protein, carbohydrate and lipid biosynthesis, as well as cell growth and proliferation. AMPK acts via direct phosphorylation of metabolic enzymes, and by longer-term effects via phosphorylation of transcription regulators. Also acts as a regulator of cellular polarity by remodeling the actin cytoskeleton; probably by indirectly activating myosin. Beta non-catalytic subunit acts as a scaffold on which the AMPK complex assembles, via its C-terminus that bridges alpha (PRKAA1 or PRKAA2) and gamma subunits (PRKAG1, PRKAG2 or PRKAG3). This Pongo abelii (Sumatran orangutan) protein is 5'-AMP-activated protein kinase subunit beta-1 (PRKAB1).